A 437-amino-acid polypeptide reads, in one-letter code: Epsilon-sarcoglycan (437 aa).

Residues 1–317 (MQLPRWWELG…LKSRDYYTDF (317 aa)) lie on the Extracellular side of the membrane. A glycan (N-linked (GlcNAc...) asparagine) is linked at Asn200. Residues 318–338 (LITLAVPSAVALVLFLILAYI) form a helical membrane-spanning segment. Over 339 to 437 (MCCRREGVEK…QQQTTGKWYP (99 aa)) the chain is Cytoplasmic.

Belongs to the sarcoglycan alpha/epsilon family. N-glycosylated. Post-translationally, ubiquitinated, leading to its degradation by the proteasome.

The protein localises to the cell membrane. It localises to the sarcolemma. Its subcellular location is the cytoplasm. It is found in the cytoskeleton. The protein resides in the cell projection. The protein localises to the dendrite. It localises to the golgi apparatus. Its function is as follows. Component of the sarcoglycan complex, a subcomplex of the dystrophin-glycoprotein complex which forms a link between the F-actin cytoskeleton and the extracellular matrix. The polypeptide is Epsilon-sarcoglycan (Macaca fascicularis (Crab-eating macaque)).